Reading from the N-terminus, the 217-residue chain is Ribonuclease T (217 aa).

The Exonuclease domain occupies Val-20–Phe-194. The Mg(2+) site is built by Asp-23, Glu-25, His-181, and Asp-186. Residue His-181 is the Proton donor/acceptor of the active site.

Belongs to the RNase T family. In terms of assembly, homodimer. It depends on Mg(2+) as a cofactor.

Its function is as follows. Trims short 3' overhangs of a variety of RNA species, leaving a one or two nucleotide 3' overhang. Responsible for the end-turnover of tRNA: specifically removes the terminal AMP residue from uncharged tRNA (tRNA-C-C-A). Also appears to be involved in tRNA biosynthesis. The chain is Ribonuclease T from Buchnera aphidicola subsp. Baizongia pistaciae (strain Bp).